The following is a 175-amino-acid chain: Ribosome maturation factor RimM (175 aa).

The region spanning 96–175 (EEDFYWRDLI…LIQVNWEPDF (80 aa)) is the PRC barrel domain.

This sequence belongs to the RimM family. As to quaternary structure, binds ribosomal protein uS19.

The protein resides in the cytoplasm. Its function is as follows. An accessory protein needed during the final step in the assembly of 30S ribosomal subunit, possibly for assembly of the head region. Essential for efficient processing of 16S rRNA. May be needed both before and after RbfA during the maturation of 16S rRNA. It has affinity for free ribosomal 30S subunits but not for 70S ribosomes. The chain is Ribosome maturation factor RimM from Psychromonas ingrahamii (strain DSM 17664 / CCUG 51855 / 37).